The following is a 388-amino-acid chain: Chorismate synthase (388 aa).

2 residues coordinate NADP(+): Arg39 and Arg45. FMN contacts are provided by residues 130-132, 251-252, Ala296, 311-315, and Arg337; these read RSS, NA, and KPIPT.

The protein belongs to the chorismate synthase family. As to quaternary structure, homotetramer. It depends on FMNH2 as a cofactor.

The enzyme catalyses 5-O-(1-carboxyvinyl)-3-phosphoshikimate = chorismate + phosphate. It participates in metabolic intermediate biosynthesis; chorismate biosynthesis; chorismate from D-erythrose 4-phosphate and phosphoenolpyruvate: step 7/7. Its function is as follows. Catalyzes the anti-1,4-elimination of the C-3 phosphate and the C-6 proR hydrogen from 5-enolpyruvylshikimate-3-phosphate (EPSP) to yield chorismate, which is the branch point compound that serves as the starting substrate for the three terminal pathways of aromatic amino acid biosynthesis. This reaction introduces a second double bond into the aromatic ring system. This Streptococcus equi subsp. zooepidemicus (strain MGCS10565) protein is Chorismate synthase.